The following is an 887-amino-acid chain: Translation initiation factor IF-2 (887 aa).

Positions 1 to 291 (MTDQADTSER…RRRVERERKK (291 aa)) are disordered. Low complexity predominate over residues 58-117 (AAPAAAPAAAPAAAEEVAKKPVAAPEVKPAAPVEERPAPVAKAAPEVKAVPAPAPAAAPA). Composition is skewed to basic and acidic residues over residues 148-178 (SAREREGEDRRRAEEEARRFAEEDARREAER), 185-194 (AAEEASRHTA), 201-215 (RAAEEAKRRLDDDRP), and 267-276 (AFDDESERQR). The tr-type G domain maps to 385 to 553 (ARAPVVTVMG…TILLQAELLD (169 aa)). Positions 394-401 (GHVDHGKT) are G1. Position 394-401 (394-401 (GHVDHGKT)) interacts with GTP. A G2 region spans residues 419–423 (GITQH). Positions 441 to 444 (DTPG) are G3. GTP is bound by residues 441–445 (DTPGH) and 495–498 (NKMD). The tract at residues 495 to 498 (NKMD) is G4. The G5 stretch occupies residues 531 to 533 (SAK).

The protein belongs to the TRAFAC class translation factor GTPase superfamily. Classic translation factor GTPase family. IF-2 subfamily.

It localises to the cytoplasm. Functionally, one of the essential components for the initiation of protein synthesis. Protects formylmethionyl-tRNA from spontaneous hydrolysis and promotes its binding to the 30S ribosomal subunits. Also involved in the hydrolysis of GTP during the formation of the 70S ribosomal complex. The polypeptide is Translation initiation factor IF-2 (Parvibaculum lavamentivorans (strain DS-1 / DSM 13023 / NCIMB 13966)).